Reading from the N-terminus, the 968-residue chain is RNA polymerase-associated protein RapA (968 aa).

In terms of domain architecture, Helicase ATP-binding spans 163–332 (EVGRRYAPRV…FARLRLLDPD (170 aa)). An ATP-binding site is contributed by 176–183 (DEVGLGKT). Positions 278 to 281 (DEAH) match the DEAH box motif. Residues 491–655 (RVDWLIEFLK…EFAEDLLNVL (165 aa)) form the Helicase C-terminal domain.

This sequence belongs to the SNF2/RAD54 helicase family. RapA subfamily. Interacts with the RNAP. Has a higher affinity for the core RNAP than for the holoenzyme. Its ATPase activity is stimulated by binding to RNAP.

Functionally, transcription regulator that activates transcription by stimulating RNA polymerase (RNAP) recycling in case of stress conditions such as supercoiled DNA or high salt concentrations. Probably acts by releasing the RNAP, when it is trapped or immobilized on tightly supercoiled DNA. Does not activate transcription on linear DNA. Probably not involved in DNA repair. This chain is RNA polymerase-associated protein RapA, found in Shewanella sp. (strain ANA-3).